We begin with the raw amino-acid sequence, 470 residues long: SVGFKAGVKEYKLTYYTPEYETKDTDILAAFRVTAQPGVPPEEAGAAVAAESSTGTWTAVWTDGLTSLDRYKGRCYHIEPVVGEEEQFIAYVAYPLDLFEEGSVTNMFTSIVGNVFGFKALRALRLEDLRIPTAYVKTFQGPPHGIQVERDKLNKYGRPLLGCTIKPKLGLSAKNYGRAVYECLRGGLDFTKDDENVNSQPFMRWRDRFCFCAEALYKAQAETGEIKGHYLNATAGTCEEMIKRAVFARELGVPIVMHDYLTGGFTANTTLAHYCRDNGLLLHIHRAMHAVIDRQKNHGMHFRVLAKALRMSGGDHVHAGTVVGKLEGERDITLGFVDLLRDDYIEKDRSRGVYFTQDWVSLPGVIPVASGGIHVWHMPALTEIFGDDAVLQFGGGTLGHPWGNPPGAVANRVALEACVKARNEGRDLATEGNEIIREACKWSPELAAACEVWKEIRFNFAAVDTLDPTA.

Lys5 is modified (N6,N6,N6-trimethyllysine). Residues Asn114 and Thr164 each coordinate substrate. The active-site Proton acceptor is the Lys166. Lys168 is a binding site for substrate. Lys192, Asp194, and Glu195 together coordinate Mg(2+). An N6-carboxylysine modification is found at Lys192. The active-site Proton acceptor is His285. Residues Arg286, His318, and Ser370 each coordinate substrate.

It belongs to the RuBisCO large chain family. Type I subfamily. Heterohexadecamer of 8 large chains and 8 small chains; disulfide-linked. The disulfide link is formed within the large subunit homodimers. Mg(2+) is required as a cofactor. In terms of processing, the disulfide bond which can form in the large chain dimeric partners within the hexadecamer appears to be associated with oxidative stress and protein turnover.

It localises to the plastid. It is found in the chloroplast. The catalysed reaction is 2 (2R)-3-phosphoglycerate + 2 H(+) = D-ribulose 1,5-bisphosphate + CO2 + H2O. It carries out the reaction D-ribulose 1,5-bisphosphate + O2 = 2-phosphoglycolate + (2R)-3-phosphoglycerate + 2 H(+). RuBisCO catalyzes two reactions: the carboxylation of D-ribulose 1,5-bisphosphate, the primary event in carbon dioxide fixation, as well as the oxidative fragmentation of the pentose substrate in the photorespiration process. Both reactions occur simultaneously and in competition at the same active site. The protein is Ribulose bisphosphate carboxylase large chain of Bertiera breviflora.